The following is an 882-amino-acid chain: Cadherin-1 (882 aa).

Positions 1 to 22 are cleaved as a signal peptide; sequence MGPWSRSLSALLLLLQVSSWLC. The propeptide occupies 23-154; sequence QEPEPCHPGF…SSSGLRRRKR (132 aa). An N-linked (GlcNAc...) asparagine glycan is attached at Asn144. Cadherin domains lie at 155–262, 263–375, 376–486, 487–593, and 594–697; these read DWVI…KPEF, TQEV…PPVF, NPTT…APIF, VPPE…DNAP, and IPEP…VCKK. Over 155-709 the chain is Extracellular; that stretch reads DWVIPPISCP…PIEAGLQIPA (555 aa). Residue Asp257 participates in Ca(2+) binding. A glycan (O-linked (Man...) serine) is linked at Ser280. O-linked (Man...) threonine glycosylation occurs at Thr285. A Ca(2+)-binding site is contributed by Asp288. Thr358, Thr470, Thr472, and Thr509 each carry an O-linked (Man...) threonine glycan. A glycan (N-linked (GlcNAc...) asparagine) is linked at Asn558. O-linked (Man...) threonine glycans are attached at residues Thr576, Thr578, and Thr580. Asn637 carries an N-linked (GlcNAc...) asparagine glycan. A helical membrane pass occupies residues 710 to 730; the sequence is ILGILGGILALLILILLLLLF. Residues 731–882 are Cytoplasmic-facing; it reads LRRRAVVKEP…ADMYGGGEDD (152 aa). The segment at 747–767 is disordered; that stretch reads DTRDNVYYYDEEGGGEEDQDF. 3 positions are modified to phosphotyrosine; by SRC: Tyr753, Tyr754, and Tyr755. A compositionally biased stretch (acidic residues) spans 755–767; that stretch reads YDEEGGGEEDQDF. The required for binding CTNND1 and PSEN1 stretch occupies residues 758–769; that stretch reads EGGGEEDQDFDL. Phosphoserine is present on residues Ser770, Ser793, Ser838, Ser840, and Ser846. Residues 811–882 are required for binding alpha, beta and gamma catenins; sequence IDENLKAADT…ADMYGGGEDD (72 aa).

As to quaternary structure, homodimer; disulfide-linked. Component of an E-cadherin/ catenin adhesion complex composed of at least E-cadherin/CDH1, beta-catenin/CTNNB1 or gamma-catenin/JUP, and potentially alpha-catenin/CTNNA1; the complex is located to adherens junctions. Found in a complex composed of CDH1, RAP1A and PKP3; PKP3 acts as a scaffold protein within the complex, the complex is required for CDH1 localization to mature desmosome cell junctions. Interacts with the TRPV4 and CTNNB1 complex. Interacts with CTNND1. The stable association of CTNNA1 is controversial as CTNNA1 was shown not to bind to F-actin when assembled in the complex. Alternatively, the CTNNA1-containing complex may be linked to F-actin by other proteins such as LIMA1. Interaction with PSEN1, cleaves CDH1 resulting in the disassociation of cadherin-based adherens junctions (CAJs). Interacts with AJAP1 and DLGAP5. Interacts with TBC1D2. Interacts with LIMA1. Interacts with CAV1. Interacts with PIP5K1C. Interacts with RAB8B. Interacts with DDR1; this stabilizes CDH1 at the cell surface and inhibits its internalization. Interacts with RAPGEF2. Interacts with KLRG1. Forms a ternary complex composed of ADAM10, CADH1 and EPHA4; within the complex, CADH1 is cleaved by ADAM10 which disrupts adherens junctions. Interacts with SPEF1. Interacts with CTNNB1 and PKP2. Interacts with AMOTL2; the interaction may facilitate binding of radial actin fibers to cell junction complexes. Interacts with DSG3; the interaction is required for CDH1 localization to developing adherens junctions. Post-translationally, during apoptosis or with calcium influx, cleaved by a membrane-bound metalloproteinase (ADAM10), PS1/gamma-secretase and caspase-3. Processing by the metalloproteinase, induced by calcium influx, causes disruption of cell-cell adhesion and the subsequent release of beta-catenin into the cytoplasm. The residual membrane-tethered cleavage product is rapidly degraded via an intracellular proteolytic pathway. Cleavage by caspase-3 releases the cytoplasmic tail resulting in disintegration of the actin microfilament system. The gamma-secretase-mediated cleavage promotes disassembly of adherens junctions. During development of the cochlear organ of Corti, cleavage by ADAM10 at adherens junctions promotes pillar cell separation. N-glycosylation at Asn-637 is essential for expression, folding and trafficking. Addition of bisecting N-acetylglucosamine by MGAT3 modulates its cell membrane location. In terms of processing, ubiquitinated by a SCF complex containing SKP2, which requires prior phosphorylation by CK1/CSNK1A1. Ubiquitinated by CBLL1/HAKAI, requires prior phosphorylation at Tyr-754. Post-translationally, O-glycosylated. O-manosylated by TMTC1, TMTC2, TMTC3 or TMTC4. Thr-285 and Thr-509 are O-mannosylated by TMTC2 or TMTC4 but not TMTC1 or TMTC3.

Its subcellular location is the cell junction. It localises to the adherens junction. It is found in the cell membrane. The protein resides in the endosome. The protein localises to the golgi apparatus. Its subcellular location is the trans-Golgi network. It localises to the cytoplasm. It is found in the desmosome. Functionally, cadherins are calcium-dependent cell adhesion proteins. They preferentially interact with themselves in a homophilic manner in connecting cells; cadherins may thus contribute to the sorting of heterogeneous cell types. CDH1 is involved in mechanisms regulating cell-cell adhesions, mobility and proliferation of epithelial cells. Promotes organization of radial actin fiber structure and cellular response to contractile forces, via its interaction with AMOTL2 which facilitates anchoring of radial actin fibers to CDH1 junction complexes at the cell membrane. Plays a role in the early stages of desmosome cell-cell junction formation via facilitating the recruitment of DSG2 and DSP to desmosome plaques. Has a potent invasive suppressor role. It is a ligand for integrin alpha-E/beta-7. E-Cad/CTF2 promotes non-amyloidogenic degradation of Abeta precursors. Has a strong inhibitory effect on APP C99 and C83 production. In Pongo abelii (Sumatran orangutan), this protein is Cadherin-1 (CDH1).